The sequence spans 928 residues: MYCBP-associated protein (928 aa).

2 disordered regions span residues 1-38 (MKKA…PVSN) and 164-183 (EEPK…APPL). The span at 164 to 177 (EEPKPKSPKEEKRP) shows a compositional bias: basic and acidic residues. S557 is subject to Phosphoserine. T558 carries the post-translational modification Phosphothreonine. The residue at position 564 (S564) is a Phosphoserine. The tract at residues 786 to 881 (IPDEGQKSPP…SSATSQEPID (96 aa)) is disordered. Residues 806 to 865 (LGKEDRRGGAQEKKQLSARDKEEKKGSKTPSKEDRLNSKKQKAKDDKKVVKSTSRDRLLS) show a composition bias toward basic and acidic residues.

As to quaternary structure, interacts with MYCBP. As to expression, expressed in brain, retina, testis, heart and lung. Not detected in liver, kidney or intestine. In brain, highly abundant in CNS neurons of the hippocampus and cerebellum. Strongly expressed in cochlea and vestibular sensory epithelia. In both the organ of Corti and the vestibular organ, expression is restricted to hair cells.

Its subcellular location is the cytoplasm. It is found in the membrane. Its function is as follows. May play a role in spermatogenesis. May be involved in synaptic processes. This chain is MYCBP-associated protein, found in Rattus norvegicus (Rat).